Reading from the N-terminus, the 337-residue chain is DNA-directed RNA polymerase subunit alpha (337 aa).

The interval 1 to 233 (MVREKVKVST…NLFIPFLHVE (233 aa)) is alpha N-terminal domain (alpha-NTD). Residues 267-337 (LAFQYIFIDQ…IEKAFQKKID (71 aa)) form an alpha C-terminal domain (alpha-CTD) region.

Belongs to the RNA polymerase alpha chain family. As to quaternary structure, in plastids the minimal PEP RNA polymerase catalytic core is composed of four subunits: alpha, beta, beta', and beta''. When a (nuclear-encoded) sigma factor is associated with the core the holoenzyme is formed, which can initiate transcription.

It is found in the plastid. Its subcellular location is the chloroplast. It carries out the reaction RNA(n) + a ribonucleoside 5'-triphosphate = RNA(n+1) + diphosphate. DNA-dependent RNA polymerase catalyzes the transcription of DNA into RNA using the four ribonucleoside triphosphates as substrates. This is DNA-directed RNA polymerase subunit alpha from Arabis hirsuta (Hairy rock-cress).